We begin with the raw amino-acid sequence, 1171 residues long: MPRKGNGQLPLPDGWEEARDYDGKVFYIDHNSRQTSWIDPRDRLTKPLSFADCVGNELPWGWESSYDPQIGVYFINHINQTTQIEDPRKLWRNEQERMLKDYLMVAQDALSTQKELYHIKEQRLALALDEYVRLNDAYKEKSSSRTSLFSGSSSSTKYDPDILKAEISTTKVRVKKLKRELSQMKQELLYKEQGFETLQRIDQKMSGGQSGYELREAKDILSELKSIRKAISTGEKEKQDLMQSLVKLKERFHLEEARGRSEPDLRSNLANSHLSLSRQTLDAGSQTDISGDIGVRSRSNLAEKVRLSLQYEEAKRSMANLKIELAKLDSEAWPGALDVEKEKLMLINEKEELLKELQFVTTRRRTQGEIERLEGERRRLEEELLSVKSSPSKALAEQLKIQEKKKELVKKLEEVTKSATYLHSQLKSLSASTLSVSSGSSIGSLASSRGSLNTSSRGSLNSLSSTDLYYNQNEPAADLDYQYKLDFLLQEKSGYIPCGPITTIHENEVVHCHERIDYTNSPTAQQDTQDAKPPKSVTSLSSLSSLSSLSPPGSPPVLEGVFSLCTQDSLRTGFEISELPESFADMNLHENLQLMESVAGESQALAERKSTGEGLRHQSSASQEGRTDIEFPRKNPDRVQEEKAMCVSAAVSDESVAGDSGVYEPSVKPPGEDPVFNDDYSILGAAQAQLILRYDSGNSSFVIIIVKARNNLSYVQFGSRIYFRVAVLPSSNDTSCLFRTKVYPATESVLFNELFRVSISQTTLQQKTLRVDMCSVGKTHREDCLAGTQISLADFSFSNDVHTQWYTLLPSRTIPLHKEQLEKSVLSASNTQTAALDLDAVSALLERTSAELEAVEQELAQEDDDQEQLCPGDDWPEMAPEESFSTLEEHEADLLLSGEYYAVPLQLSSETTEKSEELYGETSNWDSVVSPLPQAELPTLVDKETNTEEALQENLSVRPKERANLGSRQRPFVRNSMIVRSQTFSPGEKNQYICRLNRSDSDSSTLAKKSPFIRNANERRSLRVKRPICQPMTRRTVHECRERTSLDLELDLQASLTRQSRLNDELQSLRDLKQRLEEMKARGETELPTCVLEDERFQRLLKQAEKQAEQSKEEQKQGLNAEKLMRKASKDVCRLREQSQKVPLQVQSFREKITYFTRAKISIPSLSADDV.

2 WW domains span residues 9–42 (LPLP…DPRD) and 56–89 (NELP…DPRK). Coiled-coil stretches lie at residues 120 to 193 (KEQR…YKEQ), 223 to 257 (ELKS…LEEA), and 301 to 420 (LAEK…KSAT). Disordered stretches follow at residues 521-552 (SPTA…LSPP) and 603-637 (QALA…KNPD). Over residues 534–551 (PKSVTSLSSLSSLSSLSP) the composition is skewed to low complexity. Basic and acidic residues-rich tracts occupy residues 606 to 616 (AERKSTGEGLR) and 625 to 637 (GRTD…KNPD). The region spanning 684–806 (GAAQAQLILR…FSNDVHTQWY (123 aa)) is the C2 domain. Coiled-coil stretches lie at residues 836 to 870 (LDLD…EQLC) and 1047 to 1123 (DLEL…NAEK).

This sequence belongs to the WWC family.

It is found in the cytoplasm. Its subcellular location is the cytosol. Negative regulator of the Hippo signaling pathway, also known as the Salvador-Warts-Hippo (SWH) pathway. This chain is Protein WWC2 (wwc2), found in Xenopus tropicalis (Western clawed frog).